Consider the following 94-residue polypeptide: Co-chaperonin GroES (94 aa).

Heptamer of 7 subunits arranged in a ring. Interacts with the chaperonin GroEL.

The protein localises to the cytoplasm. Its function is as follows. Together with the chaperonin GroEL, plays an essential role in assisting protein folding. The GroEL-GroES system forms a nano-cage that allows encapsulation of the non-native substrate proteins and provides a physical environment optimized to promote and accelerate protein folding. GroES binds to the apical surface of the GroEL ring, thereby capping the opening of the GroEL channel. In Thermoanaerobacter brockii (Thermoanaerobium brockii), this protein is Co-chaperonin GroES.